Consider the following 426-residue polypeptide: Tyrosine--tRNA ligase (426 aa).

Position 37 (Tyr-37) interacts with L-tyrosine. Positions 42 to 51 (PTADSLHLGH) match the 'HIGH' region motif. Residues Tyr-175 and Gln-179 each contribute to the L-tyrosine site. The 'KMSKS' region motif lies at 235 to 239 (KFGKT). Lys-238 contributes to the ATP binding site. The 59-residue stretch at 357–415 (TDLMQALVESELQPSRGQARKAIAANGVTVNGIKQPDPDYVLNENDRYFSNYTLLRRGK) folds into the S4 RNA-binding domain.

The protein belongs to the class-I aminoacyl-tRNA synthetase family. TyrS type 1 subfamily. Homodimer.

It is found in the cytoplasm. It catalyses the reaction tRNA(Tyr) + L-tyrosine + ATP = L-tyrosyl-tRNA(Tyr) + AMP + diphosphate + H(+). Catalyzes the attachment of tyrosine to tRNA(Tyr) in a two-step reaction: tyrosine is first activated by ATP to form Tyr-AMP and then transferred to the acceptor end of tRNA(Tyr). This is Tyrosine--tRNA ligase from Klebsiella pneumoniae (strain 342).